The sequence spans 261 residues: uncharacterized protein (261 aa).

2 consecutive transmembrane segments (helical) span residues 4-21 and 33-55; these read RLIAIATFVVTFGILIVL and FSILSILAAVLTIAAYFFTLVLF.

It localises to the cell membrane. This is an uncharacterized protein from Archaeoglobus fulgidus (strain ATCC 49558 / DSM 4304 / JCM 9628 / NBRC 100126 / VC-16).